Here is a 787-residue protein sequence, read N- to C-terminus: MAGVLYDEEYVPQEPDYLYCPYEWEGEDPTQCDANVPSVSYLVEAVKKSFTEGNHDMLISCESYHAECCEGPLMNKGLTLSTYFMSYPGISLPAFGGGVIHVTSARVCMQAFYAVTPGRCSCSCGTQFIYRAKGGTGLTFDATNTISSAFKFEDGKVKWLTEDLGLALLAGCFLKYVPIPHEIEIKIERKVEPVSALDFWEPEGLISDVHFVHPQERALAPEPPMDVEMVRLVRTELFEHFNPTLLLNARSDFSGEKLKEVELPRAQSEPLVPRVCLPRGDDALIDQFFIDKAPEHFNREPATDQWQVESDDFTVDFPTQVRLRERDEDWFRRKPDFAVSSIRTGLEMPRIATKKEMLMAFSKRNVGAPQMVEVPQEIHVKRLADRFFRTFLKEGGWDKGDGHYWDDFFHRKGRKVFSLENCYDDPLSSYLVMLKSAGKFSLDLNFPVRSVPQTITYHEKWVTEVFSPMFLQVMARFFSRLQDWVVVPAGPMADFSRVWPSFEGKCLTEIDLSKFDKSQGKLLHDVQREIFLRLGFPPIWCDWWFKFHESSYLNDKNLGIAFSVDYQRRTGNTATYFGNTLVTMIMMAEVYELDSLPFCGLFSGDDNLIVTDRPLEGRVSLFPNMFNMEAKVMRPGQNYMCSKYLCTVDGRVTPVPDPFKLLKKAGASCPLEHLDDFYESFLDYTKYLVRDEVRTLIPRLMAHRYQVSMDEAGVALDQIMSWRKSKTQFFKHFQYRKPIKDSLEAVKSDFLSAFGKVDDRIRVWRGRRTNHKKEVDALKVPLVSFRE.

Residues 505–619 (KCLTEIDLSK…VTDRPLEGRV (115 aa)) enclose the RdRp catalytic domain.

It belongs to the ssRNA positive-strand viruses RNA-directed RNA polymerase family. Interacts with replication protein 1a.

The catalysed reaction is RNA(n) + a ribonucleoside 5'-triphosphate = RNA(n+1) + diphosphate. Functionally, RNA-dependent RNA polymerase which replicates the viral genome composed of 3 RNA segments, RNA1, RNA2 and RNA3. The sequence is that of RNA-directed RNA polymerase 2a from Olive latent virus 2 (isolate Italy) (OLV-2).